Here is a 47-residue protein sequence, read N- to C-terminus: Defensin Ec-AMP-D1 (47 aa).

4 disulfides stabilise this stretch: cysteine 3-cysteine 47, cysteine 14-cysteine 34, cysteine 20-cysteine 41, and cysteine 24-cysteine 43.

In terms of biological role, has antifungal activity. Inhibits spore germination in F.graminearum (IC(50)=15 ug/ml), F.oxysporum (IC(50)=102 ug/ml), F.verticillioides (IC(50)=8.5 ug/ml) and D.maydis (IC(50)=12.5 ug/ml), but not in C.graminicola, B.cinerea and H.sativum at concentrations below 30 ug/ml. Inhibits hyphal development in P.infestans (IC(50)=25.5 ug/ml), but not release of zoospores. At concentrations above 100 ug/ml, induces morphological changes such as lysis of hyphae and sporangia in P.infestans. This is Defensin Ec-AMP-D1 from Echinochloa crus-galli (Barnyard grass).